The following is a 75-amino-acid chain: Anionic peptide (75 aa).

A signal peptide spans 1-24 (MVSKSLIVLLLVSVLVSTFYTSEA).

The protein belongs to the non-disulfide-bridged peptide (NDBP) superfamily. As to expression, expressed by the venom gland.

The protein localises to the secreted. The chain is Anionic peptide from Tityus discrepans (Venezuelan scorpion).